Reading from the N-terminus, the 63-residue chain is Prokaryotic ubiquitin-like protein Pup (63 aa).

Residues Met1 to Val28 form a disordered region. The ARC ATPase binding stretch occupies residues Asp19–Tyr57. Glu63 participates in a covalent cross-link: Isoglutamyl lysine isopeptide (Glu-Lys) (interchain with K-? in acceptor proteins).

It belongs to the prokaryotic ubiquitin-like protein family. Strongly interacts with the proteasome-associated ATPase ARC through a hydrophobic interface; the interacting region of Pup lies in its C-terminal half. There is one Pup binding site per ARC hexamer ring.

The protein operates within protein degradation; proteasomal Pup-dependent pathway. Functionally, protein modifier that is covalently attached to lysine residues of substrate proteins, thereby targeting them for proteasomal degradation. The tagging system is termed pupylation. This is Prokaryotic ubiquitin-like protein Pup from Corynebacterium efficiens (strain DSM 44549 / YS-314 / AJ 12310 / JCM 11189 / NBRC 100395).